Consider the following 123-residue polypeptide: Large ribosomal subunit protein uL24 (123 aa).

It belongs to the universal ribosomal protein uL24 family. Part of the 50S ribosomal subunit.

Functionally, one of two assembly initiator proteins, it binds directly to the 5'-end of the 23S rRNA, where it nucleates assembly of the 50S subunit. Its function is as follows. Located at the polypeptide exit tunnel on the outside of the subunit. The polypeptide is Large ribosomal subunit protein uL24 (Pyrobaculum aerophilum (strain ATCC 51768 / DSM 7523 / JCM 9630 / CIP 104966 / NBRC 100827 / IM2)).